Consider the following 1292-residue polypeptide: MDASYDGTEVTVVMEEIEEAYCYTSPGPPKKKKKYKIHGEKTKKPRSAYLLYYYDIYLKVQQELPHLPQSEINKKISESWRLLSVAERSYYLEKAKLEKEGLDPNSKLSALTAVVPDIPGFRKILPRSDYIIIPKSSLQEDRSCPQLELCVAQNQMSPKGPPLVSNTAPETVPSHAGMAEQCLAVEALAEEVGALTQSGAVQEIATSEILSQDVLLEDASLEVGESHQPYQTSLVIEETLVNGSPDLPTGSLAVPHPQVGESVSVVTVMRDSSESSSSAPATQFIMLPLPAYSVVENPTSIKLTTTYTRRGHGTCTSPGCSFTYVTRHKPPKCPTCGNFLGGKWIPKEKPAKVKVELASGVSSKGSVVKRNQQPVTTEQNSSKENASKLTLENSEAVSQLLNVAPPREVGEESEWEEVIISDAHVLVKEAPGNCGTAVTKTPVVKSGVQPEVTLGTTDNDSPGADVPTPSEGTSTSSPLPAPKKPTGADLLTPGSRAPELKGRARGKPSLLAAARPMRAILPAPVNVGRGSSMGLPRARQAFSLSDKTPSVRTCGLKPSTLKQLGQPIQQPSGPGEVKLPSGPSNRTSQVKVVEVKPDMFPPYKYSCTVTLDLGLATSRGRGKCKNPSCSYVYTNRHKPRICPSCGVNLAKDRTEKTTKAIEVSSPLPDVLNATEPLSTAQREIQRQSTLQLLRKVLQIPENESELAEVFALIHELNSSRLILSNVSEETVTIEQTSWSNYYESPSTQCLLCSSPLFKGGQNSLAGPQECWLLTASRLQTVTAQVKMCLNPHCLALHSFIDIYTGLFNVGNKLLVSLDLLFAIRNQIKLGEDPRVSINVVLKSVQEQTEKTLTSEELSQLQELLCNGYWAFECLTVRDYNDMICGICGVAPKVEMAQRSEENVLALKSVEFTWPEFLGSNEVNVEDFWATMETEVIEQVAFPASIPITKFDASVIAPFFPPLMRGAVVVNTEKDKNLDVQPVPGSGSALVRLLQEGTCKLDEIGSYSEEKLQHLLRQCGIPFGAEDSKDQLCFSLLALYESVQNGARAIRPPRHFTGGKIYKVCPHQVVCGSKYLVRGESARDHVDLLASSRHWPPVYVVDMATSVALCADLCYPELTNQMWGRNQGCFSSPTEPPVSVSCPELLDQHYTVDMTETEHSIQHPVTKTATRRIVHAGLQPNPGDPSAGHHSLALCPELAPYATILASIVDSKPNGVRQRPIAFDNATHYYLYNRLMDFLTSREIVNRQIHDIVQSCQPGEVVIRDTLYRLGVAQIKTETEEEGEEEEVAAVAE.

Residues 42 to 110 constitute a DNA-binding region (HMG box); the sequence is TKKPRSAYLL…GLDPNSKLSA (69 aa). Disordered stretches follow at residues 363 to 391, 448 to 505, and 562 to 588; these read SKGSVVKRNQQPVTTEQNSSKENASKLTL, VQPE…GRAR, and KQLGQPIQQPSGPGEVKLPSGPSNRTS. Residues 370 to 391 are compositionally biased toward polar residues; it reads RNQQPVTTEQNSSKENASKLTL. The segment covering 467–478 has biased composition (low complexity); that stretch reads PTPSEGTSTSSP. The segment covering 562–572 has biased composition (polar residues); the sequence is KQLGQPIQQPS.

It localises to the nucleus. The chain is HMG domain-containing protein 3 from Homo sapiens (Human).